A 243-amino-acid chain; its full sequence is MNNKIDNFLKQKKLIKVISGLNNFNTTHVIKIAKAASKTNASFIDIAAAPKLVEKVKKEVPNLPICVSAIKPELFVPCVKAGAELIEIGNFDSLYNQGYKINFSDVLSLVKQTRSLLPDTPLSVTIPYLLPLNLQLELAYRLEDLNVDLIQTEGKINKITSLLDNRNIETILPTLASTYLIANNVTIPVICASGLTISTIELPFKLNASGIGIGNAVSKLNSTEEMINLLNEISTRINYSTVL.

Belongs to the ycf23 family.

Its subcellular location is the plastid. The protein localises to the cyanelle. This is an uncharacterized protein from Cyanophora paradoxa.